The following is a 533-amino-acid chain: Probable protein kinase UbiB (533 aa).

A helical membrane pass occupies residues 24 to 44 (LILELPMLPWWLRLLGATLPW). In terms of domain architecture, Protein kinase spans 126 to 494 (RFEREPLASA…WKGSRHDWLG (369 aa)). ATP-binding positions include 132-140 (LASASVAQV) and Lys-154. Residue Asp-289 is the Proton acceptor of the active site. The helical transmembrane segment at 510–530 (LGQQLEAWPAWVMLAGGVFLI) threads the bilayer.

The protein belongs to the ABC1 family. UbiB subfamily.

The protein localises to the cell inner membrane. It functions in the pathway cofactor biosynthesis; ubiquinone biosynthesis [regulation]. Is probably a protein kinase regulator of UbiI activity which is involved in aerobic coenzyme Q (ubiquinone) biosynthesis. The sequence is that of Probable protein kinase UbiB from Pseudomonas aeruginosa (strain ATCC 15692 / DSM 22644 / CIP 104116 / JCM 14847 / LMG 12228 / 1C / PRS 101 / PAO1).